We begin with the raw amino-acid sequence, 329 residues long: Acetyl-coenzyme A carboxylase carboxyl transferase subunit alpha (329 aa).

The 255-residue stretch at 40–294 folds into the CoA carboxyltransferase C-terminal domain; sequence QLESLAARRR…RAAIERHLEQ (255 aa).

It belongs to the AccA family. In terms of assembly, acetyl-CoA carboxylase is a heterohexamer composed of biotin carboxyl carrier protein (AccB), biotin carboxylase (AccC) and two subunits each of ACCase subunit alpha (AccA) and ACCase subunit beta (AccD).

The protein localises to the cytoplasm. The catalysed reaction is N(6)-carboxybiotinyl-L-lysyl-[protein] + acetyl-CoA = N(6)-biotinyl-L-lysyl-[protein] + malonyl-CoA. It participates in lipid metabolism; malonyl-CoA biosynthesis; malonyl-CoA from acetyl-CoA: step 1/1. In terms of biological role, component of the acetyl coenzyme A carboxylase (ACC) complex. First, biotin carboxylase catalyzes the carboxylation of biotin on its carrier protein (BCCP) and then the CO(2) group is transferred by the carboxyltransferase to acetyl-CoA to form malonyl-CoA. The sequence is that of Acetyl-coenzyme A carboxylase carboxyl transferase subunit alpha from Synechococcus sp. (strain CC9605).